The chain runs to 91 residues: Small ribosomal subunit protein uS19 (91 aa).

Belongs to the universal ribosomal protein uS19 family.

Protein S19 forms a complex with S13 that binds strongly to the 16S ribosomal RNA. This chain is Small ribosomal subunit protein uS19, found in Paraburkholderia phymatum (strain DSM 17167 / CIP 108236 / LMG 21445 / STM815) (Burkholderia phymatum).